A 303-amino-acid polypeptide reads, in one-letter code: Light-independent protochlorophyllide reductase iron-sulfur ATP-binding protein (303 aa).

The interval 1–24 (MSSVLERPAAPAILPSRQDGEGSV) is disordered. Residues 47–52 (GIGKST) and Lys76 contribute to the ATP site. Ser51 is a binding site for Mg(2+). 2 residues coordinate [4Fe-4S] cluster: Cys132 and Cys166. ATP-binding positions include 217 to 218 (NR) and 241 to 243 (PDL).

The protein belongs to the NifH/BchL/ChlL family. Homodimer. Protochlorophyllide reductase is composed of three subunits; BchL, BchN and BchB. Requires [4Fe-4S] cluster as cofactor.

It catalyses the reaction chlorophyllide a + oxidized 2[4Fe-4S]-[ferredoxin] + 2 ADP + 2 phosphate = protochlorophyllide a + reduced 2[4Fe-4S]-[ferredoxin] + 2 ATP + 2 H2O. Its pathway is porphyrin-containing compound metabolism; bacteriochlorophyll biosynthesis (light-independent). Functionally, component of the dark-operative protochlorophyllide reductase (DPOR) that uses Mg-ATP and reduced ferredoxin to reduce ring D of protochlorophyllide (Pchlide) to form chlorophyllide a (Chlide). This reaction is light-independent. The L component serves as a unique electron donor to the NB-component of the complex, and binds Mg-ATP. The chain is Light-independent protochlorophyllide reductase iron-sulfur ATP-binding protein from Rhodospirillum centenum (strain ATCC 51521 / SW).